Here is a 376-residue protein sequence, read N- to C-terminus: Inactive 2'-5'-oligoadenylate synthase 1B (376 aa).

The Cytoplasmic segment spans residues 1–351 (MEQDLRSIPA…VPTEVGVPMK (351 aa)). Residues 352 to 370 (YLLCRIFWLLFWSLFHFIF) traverse the membrane as a helical; Anchor for type IV membrane protein segment. Over 371–376 (GKTSSG) the chain is Extracellular.

The protein belongs to the 2-5A synthase family. As to quaternary structure, interacts with OSBPL1A and ABCF3. As to expression, highly expressed in lung, spleen and thymus. Also detected at lower levels in heart, kidney, liver, lung, skeletal muscle, testes, uterus and ovaries.

It is found in the endoplasmic reticulum membrane. Does not have 2'-5'-OAS activity, but can bind double-stranded RNA. The full-length protein displays antiviral activity against flaviviruses such as west Nile virus (WNV) via an alternative antiviral pathway independent of RNase L. The truncated form of the protein lacks antiviral activity. This chain is Inactive 2'-5'-oligoadenylate synthase 1B (Oas1b), found in Mus musculus (Mouse).